The sequence spans 368 residues: Queuine tRNA-ribosyltransferase (368 aa).

The active-site Proton acceptor is the Asp-89. Substrate is bound by residues 89-93 (DSGGF), Asp-143, and Gly-216. The interval 247–253 (GVGKPED) is RNA binding. Catalysis depends on Asp-266, which acts as the Nucleophile. The RNA binding; important for wobble base 34 recognition stretch occupies residues 271–275 (TRNAR). Zn(2+)-binding residues include Cys-304, Cys-306, Cys-309, and His-335.

This sequence belongs to the queuine tRNA-ribosyltransferase family. Homodimer. Within each dimer, one monomer is responsible for RNA recognition and catalysis, while the other monomer binds to the replacement base PreQ1. Zn(2+) is required as a cofactor.

The catalysed reaction is 7-aminomethyl-7-carbaguanine + guanosine(34) in tRNA = 7-aminomethyl-7-carbaguanosine(34) in tRNA + guanine. The protein operates within tRNA modification; tRNA-queuosine biosynthesis. Its function is as follows. Catalyzes the base-exchange of a guanine (G) residue with the queuine precursor 7-aminomethyl-7-deazaguanine (PreQ1) at position 34 (anticodon wobble position) in tRNAs with GU(N) anticodons (tRNA-Asp, -Asn, -His and -Tyr). Catalysis occurs through a double-displacement mechanism. The nucleophile active site attacks the C1' of nucleotide 34 to detach the guanine base from the RNA, forming a covalent enzyme-RNA intermediate. The proton acceptor active site deprotonates the incoming PreQ1, allowing a nucleophilic attack on the C1' of the ribose to form the product. After dissociation, two additional enzymatic reactions on the tRNA convert PreQ1 to queuine (Q), resulting in the hypermodified nucleoside queuosine (7-(((4,5-cis-dihydroxy-2-cyclopenten-1-yl)amino)methyl)-7-deazaguanosine). The sequence is that of Queuine tRNA-ribosyltransferase from Buchnera aphidicola subsp. Schizaphis graminum (strain Sg).